Consider the following 503-residue polypeptide: ESX-5 secretion system protein EccD5 (503 aa).

10 consecutive transmembrane segments (helical) span residues 137–157, 169–189, 200–220, 224–244, 250–270, 272–292, 359–379, 414–434, 443–463, and 480–500; these read VVAV…ASGV, LTTI…MMLL, VADI…ASAP, VGSP…ALAL, RLAI…ASLS, MVAA…CVVM, FLSG…TSLC, ITLA…YALV, IVAS…AVVP, and YLCL…YAAI.

Belongs to the EccD/Snm4 family. In terms of assembly, part of the ESX-5 / type VII secretion system (T7SS), which is composed of cytosolic and membrane components. The ESX-5 membrane complex is composed of EccB5, EccC5, EccD5 and EccE5.

The protein localises to the cell inner membrane. Its function is as follows. Part of the ESX-5 specialized secretion system, which is responsible for the secretion of EsxN and a number of PE_PGRS and PPE proteins. This component is essential for ESX-5 complex stability and secretion. This is ESX-5 secretion system protein EccD5 from Mycobacterium marinum (strain ATCC BAA-535 / M).